Consider the following 190-residue polypeptide: CASP-like protein 1E2 (190 aa).

The disordered stretch occupies residues 1–21; it reads MEHEGKNNMNGMEMEKGKREL. Over 1–28 the chain is Cytoplasmic; sequence MEHEGKNNMNGMEMEKGKRELGSRKGVE. A helical membrane pass occupies residues 29-49; sequence LTMRVLALILTMAAATVLGVA. The Extracellular segment spans residues 50–83; it reads KQTKVVSIKLIPTLPPLDITTTAKASYLSAFVYN. The helical transmembrane segment at 84–104 threads the bilayer; sequence ISVNAIACGYTAISIAILMIS. Residues 105-111 are Cytoplasmic-facing; sequence RGRRSKK. A helical membrane pass occupies residues 112 to 132; sequence LLMVVLLGDLVMVALLFSGTG. The Extracellular portion of the chain corresponds to 133–163; it reads AASAIGLMGLHGNKHVMWKKVCGVFGKFCHR. Residues 164–184 traverse the membrane as a helical segment; sequence AAPSLPLTLLAAVVFMFLVVL. Over 185-190 the chain is Cytoplasmic; sequence DAIKLP.

This sequence belongs to the Casparian strip membrane proteins (CASP) family. Homodimer and heterodimers.

It is found in the cell membrane. The sequence is that of CASP-like protein 1E2 from Arabidopsis thaliana (Mouse-ear cress).